The following is a 21-amino-acid chain: Fibrinogen beta chain (21 aa).

Position 1 is a pyrrolidone carboxylic acid (Q1). Residues 1–11 (QPSYDYDEEED) are compositionally biased toward acidic residues. The interval 1 to 21 (QPSYDYDEEEDDRAKLRLDAR) is disordered. Residue Y6 is modified to Sulfotyrosine. The span at 12 to 21 (DRAKLRLDAR) shows a compositional bias: basic and acidic residues.

As to quaternary structure, heterohexamer; disulfide linked. Contains 2 sets of 3 non-identical chains (alpha, beta and gamma). The 2 heterotrimers are in head to head conformation with the N-termini in a small central domain. Conversion of fibrinogen to fibrin is triggered by thrombin, which cleaves fibrinopeptides A and B from alpha and beta chains, and thus exposes the N-terminal polymerization sites responsible for the formation of the soft clot.

The protein localises to the secreted. Functionally, cleaved by the protease thrombin to yield monomers which, together with fibrinogen alpha (FGA) and fibrinogen gamma (FGG), polymerize to form an insoluble fibrin matrix. Fibrin has a major function in hemostasis as one of the primary components of blood clots. In addition, functions during the early stages of wound repair to stabilize the lesion and guide cell migration during re-epithelialization. Was originally thought to be essential for platelet aggregation, based on in vitro studies using anticoagulated blood. However subsequent studies have shown that it is not absolutely required for thrombus formation in vivo. Enhances expression of SELP in activated platelets. Maternal fibrinogen is essential for successful pregnancy. Fibrin deposition is also associated with infection, where it protects against IFNG-mediated hemorrhage. May also facilitate the antibacterial immune response via both innate and T-cell mediated pathways. In Antilocapra americana (Pronghorn), this protein is Fibrinogen beta chain (FGB).